We begin with the raw amino-acid sequence, 264 residues long: Agamous-like MADS-box protein AGL15 (264 aa).

Positions 3-57 constitute an MADS-box domain; it reads RGKIEIKRIENANSRQVTFSKRRAGLLKKAHELSVLCDAEVAVIVFSKSGKLFEF. The region spanning 87–177 is the K-box domain; the sequence is NQEECTEVDL…RRQVQELRSF (91 aa). A disordered region spans residues 223–264; that stretch reads LQLGLPGEAHDTRKNEGDRESPSSDSVTTSTTRATAQRISLV. Over residues 230-244 the composition is skewed to basic and acidic residues; the sequence is EAHDTRKNEGDRESP. Over residues 245–257 the composition is skewed to low complexity; sequence SSDSVTTSTTRAT.

Its subcellular location is the nucleus. Functionally, probable transcription factor. This chain is Agamous-like MADS-box protein AGL15 (AGL15), found in Brassica napus (Rape).